We begin with the raw amino-acid sequence, 396 residues long: Ribosomal RNA large subunit methyltransferase I (396 aa).

In terms of domain architecture, PUA spans 2–79; that stretch reads SVRLVLAKGR…QAESIDIAFF (78 aa).

This sequence belongs to the methyltransferase superfamily. RlmI family.

It is found in the cytoplasm. It carries out the reaction cytidine(1962) in 23S rRNA + S-adenosyl-L-methionine = 5-methylcytidine(1962) in 23S rRNA + S-adenosyl-L-homocysteine + H(+). Functionally, specifically methylates the cytosine at position 1962 (m5C1962) of 23S rRNA. This chain is Ribosomal RNA large subunit methyltransferase I, found in Citrobacter koseri (strain ATCC BAA-895 / CDC 4225-83 / SGSC4696).